We begin with the raw amino-acid sequence, 453 residues long: Na(+)/H(+) antiporter NhaA (453 aa).

A run of 12 helical transmembrane segments spans residues Phe-27–Met-47, Leu-78–Ile-98, Ile-114–Phe-134, Gly-143–Gly-163, Ile-172–Phe-192, Gly-201–Ala-221, Ser-222–Ile-242, Val-249–Ile-269, Pro-316–Ala-336, Phe-346–Thr-366, Trp-385–Val-405, and Ile-421–Tyr-441.

The protein belongs to the NhaA Na(+)/H(+) (TC 2.A.33) antiporter family.

It localises to the cell inner membrane. It catalyses the reaction Na(+)(in) + 2 H(+)(out) = Na(+)(out) + 2 H(+)(in). Na(+)/H(+) antiporter that extrudes sodium in exchange for external protons. This chain is Na(+)/H(+) antiporter NhaA, found in Bartonella henselae (strain ATCC 49882 / DSM 28221 / CCUG 30454 / Houston 1) (Rochalimaea henselae).